We begin with the raw amino-acid sequence, 103 residues long: UPF0102 protein aq_041 (103 aa).

Belongs to the UPF0102 family.

This is UPF0102 protein aq_041 from Aquifex aeolicus (strain VF5).